We begin with the raw amino-acid sequence, 342 residues long: MAPSLETPESIDDVFANPIKQKPQLVAPEPQNCVGPDSQQAGKADSCAGCPNQAICASAPKGPDPDIPVISARLENVKHKILVLSGKGGVGKSTFTSLLAHAFATNPDSNVGIMDTDICGPSIPKMMGVEGETVHVSGTGWSPIWVMDNLAVMSIQFLLPNRDDAVIWRGPKKNGLIKQFLKDVEWGDLDFLLVDTPPGTSDEHLSVNSFLKGSGIDGAVMVTTPQEVSLLDVRKEIDFCRKAGIKILGLAENMSGFVCPKCSNESQIFKASTGGGRALAEEMDIPFLGSVPLDPRIRMACDYGESYFDSFPDSPACLAFQGVVKNLAMQLGLDSQDVLPDE.

[4Fe-4S] cluster is bound by residues Cys-33, Cys-47, Cys-50, and Cys-56. Residue 86–93 (GKGGVGKS) participates in ATP binding. Residues Cys-259 and Cys-262 each contribute to the [4Fe-4S] cluster site.

It belongs to the Mrp/NBP35 ATP-binding proteins family. NUBP1/NBP35 subfamily. As to quaternary structure, heterotetramer of 2 NBP35 and 2 CFD1 chains. [4Fe-4S] cluster serves as cofactor.

It is found in the cytoplasm. In terms of biological role, component of the cytosolic iron-sulfur (Fe/S) protein assembly (CIA) machinery. Required for maturation of extramitochondrial Fe-S proteins. The NBP35-CFD1 heterotetramer forms a Fe-S scaffold complex, mediating the de novo assembly of an Fe-S cluster and its transfer to target apoproteins. This chain is Cytosolic Fe-S cluster assembly factor NBP35, found in Gibberella zeae (strain ATCC MYA-4620 / CBS 123657 / FGSC 9075 / NRRL 31084 / PH-1) (Wheat head blight fungus).